The following is a 263-amino-acid chain: Neuferricin (263 aa).

Positions 1–22 (MLRICGLGVVLSLAVAAVAVMA) are cleaved as a signal peptide. One can recognise a Cytochrome b5 heme-binding domain in the interval 35 to 134 (IRLFLPEELA…KNYVFVGRLV (100 aa)). The disordered stretch occupies residues 220 to 249 (VRTTGPPSDQQDNPRHSNHGDLDNPNLEEY). Over residues 231-241 (DNPRHSNHGDL) the composition is skewed to basic and acidic residues.

This sequence belongs to the cytochrome b5 family. MAPR subfamily. As to expression, expressed in various tissues including brain, heart, adrenal gland, and kidney. In the brain, mainly expressed in pyramidal cells around the CA3 region of Ammon horn in hippocampus. Present in brain (at protein level).

Its subcellular location is the secreted. Functionally, heme-binding protein which promotes neuronal but not astrocyte differentiation. This is Neuferricin from Mus musculus (Mouse).